Consider the following 266-residue polypeptide: GTP cyclohydrolase III (266 aa).

It belongs to the archaeal-type GTP cyclohydrolase family.

It catalyses the reaction GTP + 3 H2O = 2-amino-5-formylamino-6-(5-phospho-D-ribosylamino)pyrimidin-4(3H)-one + 2 phosphate + 2 H(+). Functionally, catalyzes the formation of 2-amino-5-formylamino-6-ribofuranosylamino-4(3H)-pyrimidinone ribonucleotide monophosphate and inorganic phosphate from GTP. Also has an independent pyrophosphate phosphohydrolase activity. The chain is GTP cyclohydrolase III from Methanococcus maripaludis (strain C5 / ATCC BAA-1333).